The primary structure comprises 312 residues: Bifunctional pinoresinol-lariciresinol reductase (312 aa).

NADP(+) contacts are provided by residues 10-16 (GGTGYLG), Arg35, and Lys44. Lys139 serves as the catalytic Proton acceptor. NADP(+) is bound at residue Arg143. Residue His271 participates in substrate binding.

The protein belongs to the NmrA-type oxidoreductase family. Isoflavone reductase subfamily. Dimer. As to expression, expressed in young stems, young roots and petioles. In stems, expressed in radial parenchyma cells and in the cambial cells of developing secondary xylem.

It carries out the reaction (+)-lariciresinol + NADP(+) = (+)-pinoresinol + NADPH + H(+). It catalyses the reaction (-)-secoisolariciresinol + NADP(+) = (+)-lariciresinol + NADPH + H(+). Reductase involved in lignan biosynthesis. Catalyzes the enantioselective sequential conversion of (+)-pinoresinol into (+)-lariciresinol and of (+)-lariciresinol into (-)-secoisolariciresinol. Abstracts the 4R-hydride from the NADPH cofactor during catalysis. This Forsythia intermedia (Border forsythia) protein is Bifunctional pinoresinol-lariciresinol reductase (PLR_Fi1).